The chain runs to 562 residues: Phosphoglucomutase-1 (562 aa).

Met-1 carries the N-acetylmethionine modification. An N6-acetyllysine modification is found at Lys-16. Arg-23 lines the alpha-D-glucose 1,6-bisphosphate pocket. At Thr-115 the chain carries Phosphothreonine. Position 117 (Ser-117) interacts with alpha-D-glucose 1,6-bisphosphate. The Phosphoserine intermediate role is filled by Ser-117. A Mg(2+)-binding site is contributed by Ser-117. A phosphoserine mark is found at Ser-117 and Ser-134. Thr-185 is modified (phosphothreonine). Ser-213 is subject to Phosphoserine. Mg(2+)-binding residues include Asp-288, Asp-290, and Asp-292. Alpha-D-glucose 1,6-bisphosphate contacts are provided by Asp-292 and Arg-293. Lys-349 carries the post-translational modification N6-acetyllysine. At Tyr-353 the chain carries Phosphotyrosine. Alpha-D-glucose 1,6-bisphosphate is bound at residue Thr-357. Residue Ser-369 is modified to Phosphoserine. Positions 376, 378, and 389 each coordinate alpha-D-glucose 1,6-bisphosphate. Ser-378 is modified (phosphoserine). An N6-succinyllysine modification is found at Lys-419. Thr-467 bears the Phosphothreonine; by PAK1 mark. Residues Ser-477, Ser-485, and Ser-505 each carry the phosphoserine modification. Thr-507 is subject to Phosphothreonine. A phosphoserine mark is found at Ser-509 and Ser-541.

This sequence belongs to the phosphohexose mutase family. In terms of assembly, monomer. The cofactor is Mg(2+). Post-translationally, phosphorylation at Thr-467 by PAK1 significantly enhances enzymatic activity.

The protein resides in the cytoplasm. The enzyme catalyses alpha-D-glucose 1-phosphate = alpha-D-glucose 6-phosphate. It catalyses the reaction O-phospho-L-seryl-[protein] + alpha-D-glucose 1-phosphate = alpha-D-glucose 1,6-bisphosphate + L-seryl-[protein]. The catalysed reaction is alpha-D-glucose 1,6-bisphosphate + L-seryl-[protein] = O-phospho-L-seryl-[protein] + alpha-D-glucose 6-phosphate. Its function is as follows. Catalyzes the reversible isomerization of alpha-D-glucose 1-phosphate to alpha-D-glucose 6-phosphate. The mechanism proceeds via the intermediate compound alpha-D-glucose 1,6-bisphosphate. This enzyme participates in both the breakdown and synthesis of glucose. The protein is Phosphoglucomutase-1 (PGM1) of Bos taurus (Bovine).